The sequence spans 523 residues: Coatomer subunit delta-2 (523 aa).

The interval D218–L243 is disordered. The 242-residue stretch at S282–V523 folds into the MHD domain.

It belongs to the adaptor complexes medium subunit family. Delta-COP subfamily. In terms of assembly, oligomeric complex that consists of at least the alpha, beta, beta', gamma, delta, epsilon and zeta subunits.

It is found in the cytoplasm. The protein localises to the golgi apparatus membrane. The protein resides in the cytoplasmic vesicle. It localises to the COPI-coated vesicle membrane. Its function is as follows. The coatomer is a cytosolic protein complex that binds to dilysine motifs and reversibly associates with Golgi non-clathrin-coated vesicles, which further mediate biosynthetic protein transport from the ER, via the Golgi up to the trans Golgi network. Coatomer complex is required for budding from Golgi membranes, and is essential for the retrograde Golgi-to-ER transport of dilysine-tagged proteins. This Oryza sativa subsp. japonica (Rice) protein is Coatomer subunit delta-2.